A 394-amino-acid chain; its full sequence is 1-acylglycerol-3-phosphate O-acyltransferase ICT1 (394 aa).

Positions valine 74–proline 381 constitute an AB hydrolase-1 domain. The HXXXXD motif motif lies at histidine 374 to aspartate 379.

This sequence belongs to the peptidase S33 family. ABHD4/ABHD5 subfamily.

The catalysed reaction is a 1-acyl-sn-glycero-3-phosphate + an acyl-CoA = a 1,2-diacyl-sn-glycero-3-phosphate + CoA. In terms of biological role, lysophosphatidic acid acyltransferase involved in membrane remodeling leading to increased organic solvent tolerance. Involved in resistance to azoles and copper. The chain is 1-acylglycerol-3-phosphate O-acyltransferase ICT1 (ICT1) from Saccharomyces cerevisiae (strain ATCC 204508 / S288c) (Baker's yeast).